A 213-amino-acid polypeptide reads, in one-letter code: Na(+)-translocating NADH-quinone reductase subunit E (213 aa).

6 helical membrane passes run 12–32 (AVFVENLALAFFLGMCTFLAV), 40–60 (IGLGIAVIAIETITVPANQLI), 92–112 (FLGFISYIGVIAAMVQILEMF), 124–144 (LGIFLPLITVNCAILGASLFM), 155–175 (VVFGFGCGVGWALAIMALAGI), and 191–211 (LGITFITVGLMSLAFMSFSGI).

This sequence belongs to the NqrDE/RnfAE family. Composed of six subunits; NqrA, NqrB, NqrC, NqrD, NqrE and NqrF.

It is found in the cell inner membrane. It catalyses the reaction a ubiquinone + n Na(+)(in) + NADH + H(+) = a ubiquinol + n Na(+)(out) + NAD(+). Functionally, NQR complex catalyzes the reduction of ubiquinone-1 to ubiquinol by two successive reactions, coupled with the transport of Na(+) ions from the cytoplasm to the periplasm. NqrA to NqrE are probably involved in the second step, the conversion of ubisemiquinone to ubiquinol. This chain is Na(+)-translocating NADH-quinone reductase subunit E, found in Rhodopirellula baltica (strain DSM 10527 / NCIMB 13988 / SH1).